A 371-amino-acid polypeptide reads, in one-letter code: Putative glutamate--cysteine ligase 2 (371 aa).

This sequence belongs to the glutamate--cysteine ligase type 2 family. YbdK subfamily.

The enzyme catalyses L-cysteine + L-glutamate + ATP = gamma-L-glutamyl-L-cysteine + ADP + phosphate + H(+). ATP-dependent carboxylate-amine ligase which exhibits weak glutamate--cysteine ligase activity. The polypeptide is Putative glutamate--cysteine ligase 2 (Paraburkholderia phytofirmans (strain DSM 17436 / LMG 22146 / PsJN) (Burkholderia phytofirmans)).